A 114-amino-acid chain; its full sequence is Fructose-bisphosphate aldolase 2 (114 aa).

N35 to T38 serves as a coordination point for dihydroxyacetone phosphate.

This sequence belongs to the class II fructose-bisphosphate aldolase family. Homodimer. It depends on Zn(2+) as a cofactor.

It catalyses the reaction beta-D-fructose 1,6-bisphosphate = D-glyceraldehyde 3-phosphate + dihydroxyacetone phosphate. Its pathway is carbohydrate biosynthesis; Calvin cycle. The protein operates within carbohydrate degradation; glycolysis; D-glyceraldehyde 3-phosphate and glycerone phosphate from D-glucose: step 4/4. Functionally, catalyzes the aldol condensation of dihydroxyacetone phosphate (DHAP or glycerone-phosphate) with glyceraldehyde 3-phosphate (G3P) to form fructose 1,6-bisphosphate (FBP) in gluconeogenesis and the reverse reaction in glycolysis. The protein is Fructose-bisphosphate aldolase 2 (cbbA) of Rhodobacter capsulatus (Rhodopseudomonas capsulata).